The following is a 266-amino-acid chain: MLRFLVFASLVLCGHSTEDVPETDARVVGGAEARRNSWPSQISLQYQYGGSWHHTCGGTLIRSNWVMTAAHCVDSPMTYRVVVGEHNLSQNDGTEQYVNVQKIVSHPYWNKNNVVAGYDIALLRLAKSVTLNNYVQLGVLPREGTILANNSPCYITGWGRTRTNGELAQTLQQAYLPSVSYSICSSSSYWGSSVKNTMVCAGGDGVRSGCQGDSGGPLHCMVNGQYAVHGVTSFVSSMGCNVARKPTVFTRVSAYISWMNNVIASN.

Positions 1 to 16 (MLRFLVFASLVLCGHS) are cleaved as a signal peptide. Positions 17–26 (TEDVPETDAR) are cleaved as a propeptide — activation peptide. The Peptidase S1 domain maps to 27 to 264 (VVGGAEARRN…YISWMNNVIA (238 aa)). Residues cysteine 56 and cysteine 72 are joined by a disulfide bond. Histidine 71 serves as the catalytic Charge relay system. Glutamate 85, asparagine 87, glutamine 90, and glutamate 95 together coordinate Ca(2+). The N-linked (GlcNAc...) asparagine glycan is linked to asparagine 87. Aspartate 119 functions as the Charge relay system in the catalytic mechanism. Intrachain disulfides connect cysteine 153–cysteine 220, cysteine 184–cysteine 200, and cysteine 210–cysteine 240. The active-site Charge relay system is the serine 214.

This sequence belongs to the peptidase S1 family. Elastase subfamily. It depends on Ca(2+) as a cofactor.

The protein resides in the secreted. The enzyme catalyses Hydrolysis of proteins, including elastin. Preferential cleavage: Ala-|-Xaa.. In terms of biological role, serine proteases that hydrolyze many proteins in addition to elastin. The chain is Chymotrypsin-like elastase family member 1 (Cela1) from Mus musculus (Mouse).